The chain runs to 341 residues: Krueppel-like factor 17 (341 aa).

The disordered stretch occupies residues 214 to 252 (VTESNTQEEPFVREPPTPAPEGAESPSTSRGATRRQSPV). A compositionally biased stretch (polar residues) spans 238 to 252 (SPSTSRGATRRQSPV). 3 C2H2-type zinc fingers span residues 256-280 (YVCT…QRKH), 286-310 (FACD…KRIH), and 316-338 (HKCD…KRTH).

The protein belongs to the Sp1 C2H2-type zinc-finger protein family. As to expression, exclusively expressed in testis and ovary. Localized to step 3-8 spermatids in testis and growing oocytes in ovary.

It localises to the nucleus. Transcription repressor that binds to the promoter of target genes and prevents their expression. Acts as a negative regulator of epithelial-mesenchymal transition and metastasis in breast cancer. Specifically binds the 5'-CACCC-3' sequence in the promoter of ID1, a key metastasis regulator in breast cancer, and repress its expression. May be a germ cell-specific transcription factor that plays important roles in spermatid differentiation and oocyte development. In Mus musculus (Mouse), this protein is Krueppel-like factor 17 (Klf17).